A 275-amino-acid chain; its full sequence is Protein rolling stone (275 aa).

6 consecutive transmembrane segments (helical) span residues leucine 45 to valine 65, phenylalanine 72 to alanine 92, tryptophan 127 to leucine 147, isoleucine 162 to proline 182, isoleucine 185 to tyrosine 205, and methionine 232 to leucine 252.

In terms of tissue distribution, expressed in cells of the somatic mesoderm, most notably the muscle founder cells, between embryonic stages 12 and 14, in growing muscle fibers in dorsal, lateral and ventral positions. At stage 16 strongest expression is in some ventral muscles and muscle 8. At stages 16/17 expression is restricted to some cells of the CNS, the brain and the gonads.

Its subcellular location is the membrane. Functionally, may have a central role in the fusion process during myogenesis, within the somatic mesoderm. This chain is Protein rolling stone (rost), found in Drosophila melanogaster (Fruit fly).